The following is a 396-amino-acid chain: 1-deoxy-D-xylulose 5-phosphate reductoisomerase (396 aa).

NADPH is bound by residues T15, G16, S17, I18, G41, and N129. A 1-deoxy-D-xylulose 5-phosphate-binding site is contributed by K130. Position 131 (E131) interacts with NADPH. A Mn(2+)-binding site is contributed by D155. 1-deoxy-D-xylulose 5-phosphate contacts are provided by S156, E157, S182, and H205. E157 contributes to the Mn(2+) binding site. G211 contacts NADPH. 1-deoxy-D-xylulose 5-phosphate is bound by residues S218, N223, K224, and E227. Mn(2+) is bound at residue E227.

The protein belongs to the DXR family. It depends on Mg(2+) as a cofactor. The cofactor is Mn(2+).

The enzyme catalyses 2-C-methyl-D-erythritol 4-phosphate + NADP(+) = 1-deoxy-D-xylulose 5-phosphate + NADPH + H(+). It functions in the pathway isoprenoid biosynthesis; isopentenyl diphosphate biosynthesis via DXP pathway; isopentenyl diphosphate from 1-deoxy-D-xylulose 5-phosphate: step 1/6. Functionally, catalyzes the NADPH-dependent rearrangement and reduction of 1-deoxy-D-xylulose-5-phosphate (DXP) to 2-C-methyl-D-erythritol 4-phosphate (MEP). The chain is 1-deoxy-D-xylulose 5-phosphate reductoisomerase from Xanthomonas oryzae pv. oryzae (strain PXO99A).